A 20-amino-acid chain; its full sequence is ATP synthase subunit beta, chloroplastic (20 aa).

The segment covering 1–10 (METTNESLGY) has biased composition (polar residues). A disordered region spans residues 1–20 (METTNESLGYTDQIIGPVLD).

Belongs to the ATPase alpha/beta chains family. As to quaternary structure, F-type ATPases have 2 components, CF(1) - the catalytic core - and CF(0) - the membrane proton channel. CF(1) has five subunits: alpha(3), beta(3), gamma(1), delta(1), epsilon(1). CF(0) has four main subunits: a(1), b(1), b'(1) and c(9-12).

It localises to the plastid. The protein localises to the chloroplast thylakoid membrane. It catalyses the reaction ATP + H2O + 4 H(+)(in) = ADP + phosphate + 5 H(+)(out). In terms of biological role, produces ATP from ADP in the presence of a proton gradient across the membrane. The catalytic sites are hosted primarily by the beta subunits. This Chattonella marina var. antiqua (Red tide flagellate) protein is ATP synthase subunit beta, chloroplastic.